The chain runs to 338 residues: Ketol-acid reductoisomerase (NADP(+)) (338 aa).

Positions 1–181 (MQVYYDKDAD…GGGRAGVIET (181 aa)) constitute a KARI N-terminal Rossmann domain. NADP(+)-binding positions include 24–27 (YGSQ), arginine 47, serine 50, serine 52, and 82–85 (DEHQ). Histidine 107 is a catalytic residue. Glycine 133 lines the NADP(+) pocket. The KARI C-terminal knotted domain occupies 182-327 (SFREETETDL…ERLRGMMPWI (146 aa)). Mg(2+) is bound by residues aspartate 190, glutamate 194, glutamate 226, and glutamate 230. Serine 251 provides a ligand contact to substrate.

Belongs to the ketol-acid reductoisomerase family. It depends on Mg(2+) as a cofactor.

It catalyses the reaction (2R)-2,3-dihydroxy-3-methylbutanoate + NADP(+) = (2S)-2-acetolactate + NADPH + H(+). The enzyme catalyses (2R,3R)-2,3-dihydroxy-3-methylpentanoate + NADP(+) = (S)-2-ethyl-2-hydroxy-3-oxobutanoate + NADPH + H(+). It participates in amino-acid biosynthesis; L-isoleucine biosynthesis; L-isoleucine from 2-oxobutanoate: step 2/4. Its pathway is amino-acid biosynthesis; L-valine biosynthesis; L-valine from pyruvate: step 2/4. In terms of biological role, involved in the biosynthesis of branched-chain amino acids (BCAA). Catalyzes an alkyl-migration followed by a ketol-acid reduction of (S)-2-acetolactate (S2AL) to yield (R)-2,3-dihydroxy-isovalerate. In the isomerase reaction, S2AL is rearranged via a Mg-dependent methyl migration to produce 3-hydroxy-3-methyl-2-ketobutyrate (HMKB). In the reductase reaction, this 2-ketoacid undergoes a metal-dependent reduction by NADPH to yield (R)-2,3-dihydroxy-isovalerate. The sequence is that of Ketol-acid reductoisomerase (NADP(+)) from Alkalilimnicola ehrlichii (strain ATCC BAA-1101 / DSM 17681 / MLHE-1).